A 284-amino-acid polypeptide reads, in one-letter code: MDAIKKKMQAMKLEKDNAMDRADTLEQQNKEANIRAEKTEEEIRITHKKMQQVENELDQVQEQLSLANTKLEEKEKALQNAEGEVAALNRRIQLLEEDLERSEERLNTATTKLAEASQAADESERMRKVLENRSLSDEERMDALENQLKEARFLAEEADRKYDEVARKLAMVEADLERAEERAETGESKIVELEEELRVVGNNLKSLEVSEEKANQREEAYKEQIKTLANKLKAAEARAEFAERSVQKLQKEVDRLEDELVNEKEKYKSITDELDQTFSELSGY.

A disordered region spans residues 1 to 39 (MDAIKKKMQAMKLEKDNAMDRADTLEQQNKEANIRAEKT). A coiled-coil region spans residues 1 to 284 (MDAIKKKMQA…DQTFSELSGY (284 aa)). Positions 12-39 (KLEKDNAMDRADTLEQQNKEANIRAEKT) are enriched in basic and acidic residues.

This sequence belongs to the tropomyosin family. In terms of assembly, homodimer.

Its function is as follows. Tropomyosin, in association with the troponin complex, plays a central role in the calcium dependent regulation of muscle contraction. This is Tropomyosin (TM1) from Homarus americanus (American lobster).